The chain runs to 306 residues: tRNA dimethylallyltransferase (306 aa).

Position 9–16 (Gly-9–Thr-16) interacts with ATP. Thr-11–Thr-16 lines the substrate pocket. Residues Asp-34 to Gln-37 form an interaction with substrate tRNA region.

This sequence belongs to the IPP transferase family. As to quaternary structure, monomer. Mg(2+) is required as a cofactor.

It carries out the reaction adenosine(37) in tRNA + dimethylallyl diphosphate = N(6)-dimethylallyladenosine(37) in tRNA + diphosphate. Functionally, catalyzes the transfer of a dimethylallyl group onto the adenine at position 37 in tRNAs that read codons beginning with uridine, leading to the formation of N6-(dimethylallyl)adenosine (i(6)A). This Roseiflexus castenholzii (strain DSM 13941 / HLO8) protein is tRNA dimethylallyltransferase.